The sequence spans 192 residues: Putative metal-sulfur cluster biosynthesis proteins YuaD (192 aa).

The MOSC domain maps to 15 to 179 (ADTKSFVTKQ…VYTGDEIEVH (165 aa)).

The protein is Putative metal-sulfur cluster biosynthesis proteins YuaD (yuaD) of Bacillus subtilis (strain 168).